A 75-amino-acid chain; its full sequence is MQKRPAFDSSHIMYRAEELMSHASNRYRITVQVANRAKRRRYEEFDNIDDPMMKPTIRAIIEMSDEISQDDIISD.

The protein belongs to the RNA polymerase subunit omega family. In terms of assembly, in cyanobacteria the RNAP catalytic core is composed of 2 alpha, 1 beta, 1 beta', 1 gamma and 1 omega subunit. When a sigma factor is associated with the core the holoenzyme is formed, which can initiate transcription.

It carries out the reaction RNA(n) + a ribonucleoside 5'-triphosphate = RNA(n+1) + diphosphate. In terms of biological role, promotes RNA polymerase assembly. Latches the N- and C-terminal regions of the beta' subunit thereby facilitating its interaction with the beta and alpha subunits. The polypeptide is DNA-directed RNA polymerase subunit omega (Gloeothece citriformis (strain PCC 7424) (Cyanothece sp. (strain PCC 7424))).